Reading from the N-terminus, the 90-residue chain is UPF0367 protein P9301_01411 (90 aa).

Belongs to the UPF0367 family.

This is UPF0367 protein P9301_01411 from Prochlorococcus marinus (strain MIT 9301).